Consider the following 757-residue polypeptide: Dolichyl-diphosphooligosaccharide--protein glycosyltransferase subunit stt-3 (757 aa).

Topologically, residues 1 to 13 (MTSTTAARTASSR) are cytoplasmic. A helical membrane pass occupies residues 14–34 (VGATTLLTIVVLALAWFVGFA). At 35 to 121 (SRLFAIVRFE…VHIREVCVFL (87 aa)) the chain is on the lumenal side. The short motif at 49–51 (EFD) is the DXD motif 1 element. A Mn(2+)-binding site is contributed by Asp-51. Residues 122–140 (APTFSGLTAIATYLLTKEL) traverse the membrane as a helical segment. Topologically, residues 141 to 142 (WS) are cytoplasmic. Residues 143 to 160 (PGAGLFAACFIAISPGYT) form a helical membrane-spanning segment. Residues 161 to 171 (SRSVAGSYDNE) lie on the Lumenal side of the membrane. Positions 169 and 171 each coordinate Mn(2+). Residues 169 to 171 (DNE) carry the DXD motif 2 motif. Residues 172–191 (GIAIFALQFTYYLWVKSLKT) traverse the membrane as a helical segment. The Cytoplasmic segment spans residues 192–193 (GS). A helical transmembrane segment spans residues 194-208 (IMWASLCALSYFYMV). At 209-210 (SA) the chain is on the lumenal side. Helical transmembrane passes span 211-235 (WGGY…GRYS) and 236-261 (SRLF…FVGF). Over 262-269 (QPVRTSEH) the chain is Lumenal. The helical transmembrane segment at 270 to 289 (MPAFGVFGLLQIVALMHYAR) threads the bilayer. Over 290–299 (NRITRQQFMT) the chain is Cytoplasmic. Residues 300 to 320 (LFVGGLTILGALSVVVYFALV) form a helical membrane-spanning segment. At 321 to 358 (WGGYVAPFSGRFYSLWDTGYAKIHIPIIASVSEHQPTT) the chain is on the lumenal side. Positions 350-353 (SVSE) match the SVSE motif motif. The chain crosses the membrane as a helical span at residues 359–381 (WVSFFFDLHITAAVFPVGLWYCI). Residues 382-387 (KKVNDE) are Cytoplasmic-facing. A helical transmembrane segment spans residues 388-404 (RVFIILYAVSAVYFAGV). Residues 405-408 (MVRL) are Lumenal-facing. Arg-407 serves as a coordination point for dolichyl diphosphooligosaccharide. Residues 409 to 430 (MLTLTPAVCVLAGIGFSYTFEK) form a helical membrane-spanning segment. Over 431 to 469 (YLKDEETKERSSSQSGTTKDEKLYDKAAKNVKSRNANDG) the chain is Cytoplasmic. A helical membrane pass occupies residues 470–495 (DESGVSSNVRTIISIILVIFLLMFVV). Residues 496–757 (HATYVTSNAY…IRPAPTASKA (262 aa)) are Lumenal-facing. Positions 547–549 (WWD) are interacts with target acceptor peptide in protein substrate. Positions 547–551 (WWDYG) match the WWDYG motif motif. A dolichyl diphosphooligosaccharide-binding site is contributed by Tyr-552. Residues Asn-559 and Asn-566 are each glycosylated (N-linked (GlcNAc...) asparagine). Residue Asn-570 is glycosylated (N-linked (GlcNAc...) (high mannose) asparagine). Asn-584 is a glycosylation site (N-linked (GlcNAc...) asparagine). The DK motif signature appears at 614 to 621 (DINKFLWM). The interval 721–757 (RPTVKSEEATIPIKGKKATQGKNKKGVIRPAPTASKA) is disordered. The segment covering 734-747 (KGKKATQGKNKKGV) has biased composition (basic residues).

Belongs to the STT3 family. In terms of assembly, component of the oligosaccharyltransferase (OST) complex. Mg(2+) serves as cofactor. Requires Mn(2+) as cofactor.

It is found in the endoplasmic reticulum membrane. It catalyses the reaction a di-trans,poly-cis-dolichyl diphosphooligosaccharide + L-asparaginyl-[protein] = N(4)-(oligosaccharide-(1-&gt;4)-N-acetyl-beta-D-glucosaminyl-(1-&gt;4)-N-acetyl-beta-D-glucosaminyl)-L-asparaginyl-[protein] + a di-trans,poly-cis-dolichyl diphosphate + H(+). Its pathway is protein modification; protein glycosylation. Catalytic subunit of the oligosaccharyl transferase (OST) complex that catalyzes the initial transfer of a defined glycan (Glc(3)Man(9)GlcNAc(2) in eukaryotes) from the lipid carrier dolichol-pyrophosphate to an asparagine residue within an Asn-X-Ser/Thr consensus motif in nascent polypeptide chains, the first step in protein N-glycosylation. N-glycosylation occurs cotranslationally and the complex associates with the Sec61 complex at the channel-forming translocon complex that mediates protein translocation across the endoplasmic reticulum (ER). All subunits are required for a maximal enzyme activity. This subunit contains the active site and the acceptor peptide and donor lipid-linked oligosaccharide (LLO) binding pockets. This Caenorhabditis elegans protein is Dolichyl-diphosphooligosaccharide--protein glycosyltransferase subunit stt-3.